The primary structure comprises 462 residues: 3-isopropylmalate dehydratase large subunit (462 aa).

The [4Fe-4S] cluster site is built by C337, C397, and C400.

Belongs to the aconitase/IPM isomerase family. LeuC type 1 subfamily. As to quaternary structure, heterodimer of LeuC and LeuD. It depends on [4Fe-4S] cluster as a cofactor.

The catalysed reaction is (2R,3S)-3-isopropylmalate = (2S)-2-isopropylmalate. The protein operates within amino-acid biosynthesis; L-leucine biosynthesis; L-leucine from 3-methyl-2-oxobutanoate: step 2/4. Catalyzes the isomerization between 2-isopropylmalate and 3-isopropylmalate, via the formation of 2-isopropylmaleate. This chain is 3-isopropylmalate dehydratase large subunit, found in Listeria monocytogenes serotype 4b (strain CLIP80459).